Reading from the N-terminus, the 835-residue chain is DNA primase (835 aa).

The CHC2-type zinc-finger motif lies at 778–817 (CLNFKHRLKTQSVRIFLSLHLTPDNCVTLTLMSQCFASKC).

This sequence belongs to the herpesviridae DNA primase family. In terms of assembly, associates with the helicase and the primase-associated factor to form the helicase-primase factor.

The protein resides in the host nucleus. Essential component of the helicase/primase complex. Unwinds the DNA at the replication forks and generates single-stranded DNA for both leading and lagging strand synthesis. The primase initiates primer synthesis and thereby produces large amount of short RNA primers on the lagging strand that the polymerase elongates using dNTPs. In Saimiri sciureus (Common squirrel monkey), this protein is DNA primase (56).